Here is a 492-residue protein sequence, read N- to C-terminus: Cytoplasmic dynein 1 light intermediate chain 2 (492 aa).

61-68 (GEDGSGKT) serves as a coordination point for ATP. 3 disordered regions span residues 187–206 (PEEGCQGSPQRRGPLTSGSD), 371–423 (AKQP…KNNA), and 437–492 (LSKK…ENEA). At Ser194 the chain carries Phosphoserine. The segment covering 371–381 (AKQPATPTRAS) has biased composition (polar residues). A phosphoserine mark is found at Ser383 and Ser391. Arg397 is modified (omega-N-methylarginine). Positions 400–412 (PASVPSSSPGTSV) are enriched in low complexity. Thr441 bears the Phosphothreonine mark. A phosphoserine mark is found at Ser443 and Ser446. A compositionally biased stretch (polar residues) spans 452-469 (VQSTAKKSGQKTVLSNVQ). The span at 471-480 (ELDRMTRKPD) shows a compositional bias: basic and acidic residues. Polar residues predominate over residues 482 to 492 (MVTNSSTENEA).

The protein belongs to the dynein light intermediate chain family. As to quaternary structure, homodimer. The cytoplasmic dynein 1 complex consists of two catalytic heavy chains (HCs) and a number of non-catalytic subunits presented by intermediate chains (ICs), light intermediate chains (LICs) and light chains (LCs); the composition seems to vary in respect to the IC, LIC and LC composition. The heavy chain homodimer serves as a scaffold for the probable homodimeric assembly of the respective non-catalytic subunits. The ICs and LICs bind directly to the HC dimer and the LCs assemble on the IC dimer. Interacts with DYNC1H1; DYNC1LI1 and DYNC1LI2 bind mutually exclusive to DYNC1H.

The protein localises to the cytoplasm. Its subcellular location is the cytoskeleton. In terms of biological role, acts as one of several non-catalytic accessory components of the cytoplasmic dynein 1 complex that are thought to be involved in linking dynein to cargos and to adapter proteins that regulate dynein function. Cytoplasmic dynein 1 acts as a motor for the intracellular retrograde motility of vesicles and organelles along microtubules. May play a role in binding dynein to membranous organelles or chromosomes. The sequence is that of Cytoplasmic dynein 1 light intermediate chain 2 from Homo sapiens (Human).